The following is a 303-amino-acid chain: MHIYILGSAAGGGFPQWNCNCPNCHGVRTGTINAKVRTQSSIAISENGVDWILLNASPDIRQQLFDFKAAQPARKLRDTGITNVILMDSQLDHTTGLLTLREGCPMNVWCTEMVYQDLTTGFPVFNMLKHWNGGLQYHQIDPKQAFKINGFENLEFLPLIIQSAAPPYSPHRHDPHEGDNIALIIKDHKTQKQLFYAPGLGKIDDQIMQIMQDSDCVMIDGTLWTDDEMQQTGVGKKTGREMGHLYISGEGGSLSYLNQLSTPKKVLIHINNTNPILNENSAQFAELKANGVEVAFDGMQIEL.

It belongs to the PqqB family.

It participates in cofactor biosynthesis; pyrroloquinoline quinone biosynthesis. Functionally, may be involved in the transport of PQQ or its precursor to the periplasm. In Acinetobacter baumannii (strain ACICU), this protein is Coenzyme PQQ synthesis protein B.